The primary structure comprises 289 residues: Type III pantothenate kinase (289 aa).

An ATP-binding site is contributed by 9 to 16 (DAGNSRVK). Substrate contacts are provided by residues Y106 and 113 to 116 (GSDR). The active-site Proton acceptor is the D115. Residue T139 coordinates ATP. T209 lines the substrate pocket.

It belongs to the type III pantothenate kinase family. In terms of assembly, homodimer. The cofactor is NH4(+). K(+) serves as cofactor.

It localises to the cytoplasm. It carries out the reaction (R)-pantothenate + ATP = (R)-4'-phosphopantothenate + ADP + H(+). Its pathway is cofactor biosynthesis; coenzyme A biosynthesis; CoA from (R)-pantothenate: step 1/5. Its function is as follows. Catalyzes the phosphorylation of pantothenate (Pan), the first step in CoA biosynthesis. In Paraburkholderia phymatum (strain DSM 17167 / CIP 108236 / LMG 21445 / STM815) (Burkholderia phymatum), this protein is Type III pantothenate kinase.